Reading from the N-terminus, the 418-residue chain is Diacylglycerol O-acyltransferase 1 (418 aa).

Residues 1-30 (MSGTFNDIRRRKKEEGSPTAGITERHENKS) form a disordered region. At 1-71 (MSGTFNDIRR…LAVAWHTSSF (71 aa)) the chain is on the cytoplasmic side. Ser17 carries the phosphoserine modification. The chain crosses the membrane as a helical span at residues 72-92 (VLFSIFTLFAISTPALWVLAI). Residues 93-186 (PYMIYFFFDR…DYRNQECTGP (94 aa)) are Lumenal-facing. Asn173 carries an N-linked (GlcNAc...) asparagine glycan. The chain crosses the membrane as a helical span at residues 187–207 (TYLFGYHPHGIGALGAFGAFA). Over 208–215 (TEGCNYSK) the chain is Cytoplasmic. The chain crosses the membrane as a helical span at residues 216 to 236 (IFPGIPISLMTLVTQFHIPLY). Residues 237-289 (RDYLLALGISSVSRKNALRTLSKNQSICIVVGGARESLLSSTNGTQLILNKRK) lie on the Lumenal side of the membrane. 2 N-linked (GlcNAc...) asparagine glycosylation sites follow: Asn260 and Asn279. A helical membrane pass occupies residues 290-310 (GFIKLAIQTGNINLVPVFAFG). Topologically, residues 311–418 (EVDCYNVLST…VPDAELKIVG (108 aa)) are cytoplasmic.

This sequence belongs to the diacylglycerol acyltransferase family.

The protein resides in the lipid droplet. It localises to the endoplasmic reticulum membrane. The catalysed reaction is an acyl-CoA + a 1,2-diacyl-sn-glycerol = a triacyl-sn-glycerol + CoA. It catalyses the reaction a 2-acylglycerol + an acyl-CoA = a 1,2-diacylglycerol + CoA. The enzyme catalyses 2-(9Z-octadecenoyl)-glycerol + (9Z)-octadecenoyl-CoA = 1,2-di-(9Z-octadecenoyl)-glycerol + CoA. Its pathway is glycerolipid metabolism; triacylglycerol biosynthesis. Functionally, catalyzes the terminal and only committed step in triacylglycerol (TAG) synthesis by using diacylglycerol (DAG) and fatty acyl-CoA as substrates. Required for storage lipid synthesis. Major DAG esterifying enzyme in stationary phase when TAG production is particularly active. Involved in lipid particle synthesis from the endoplasmic reticulum, promoting localized TAG production at discrete ER subdomains, and in ergosterol biosynthesis. Also has monoacylglycerol acyltransferase (MGAT) activity, catalyzing the acyl-CoA-dependent esterification of monoacylglycerol to diacylglycerol. Can also utilize ceramide instead of DAG, acylating the ceramides by attaching a fatty acid to the hydroxy group on the first carbon atom of the long-chain base to produce 1-O-acylceramides. The polypeptide is Diacylglycerol O-acyltransferase 1 (DGA1) (Saccharomyces cerevisiae (strain ATCC 204508 / S288c) (Baker's yeast)).